Reading from the N-terminus, the 206-residue chain is Purine nucleoside phosphorylase aq_167 (206 aa).

Zn(2+)-binding residues include His42, Cys78, and His93.

Belongs to the purine nucleoside phosphorylase YfiH/LACC1 family. In terms of assembly, homodimer. Requires Cu(2+) as cofactor. Zn(2+) serves as cofactor.

The catalysed reaction is adenosine + phosphate = alpha-D-ribose 1-phosphate + adenine. It catalyses the reaction S-methyl-5'-thioadenosine + phosphate = 5-(methylsulfanyl)-alpha-D-ribose 1-phosphate + adenine. The enzyme catalyses inosine + phosphate = alpha-D-ribose 1-phosphate + hypoxanthine. It carries out the reaction adenosine + H2O + H(+) = inosine + NH4(+). In terms of biological role, purine nucleoside enzyme that catalyzes the phosphorolysis of adenosine and inosine nucleosides, yielding D-ribose 1-phosphate and the respective free bases, adenine and hypoxanthine. Also catalyzes the phosphorolysis of S-methyl-5'-thioadenosine into adenine and S-methyl-5-thio-alpha-D-ribose 1-phosphate. Also has adenosine deaminase activity. The protein is Purine nucleoside phosphorylase aq_167 of Aquifex aeolicus (strain VF5).